A 142-amino-acid chain; its full sequence is Hemoglobin subunit alpha-1 (142 aa).

The region spanning 2–142 (LLSADDKKHI…VSSVLTSKYR (141 aa)) is the Globin domain. An O2-binding site is contributed by His59. His88 serves as a coordination point for heme b.

It belongs to the globin family. Heterotetramer of two alpha chains and two beta chains. In terms of tissue distribution, red blood cells.

Its function is as follows. Involved in oxygen transport from the lung to the various peripheral tissues. The polypeptide is Hemoglobin subunit alpha-1 (hba1) (Xenopus borealis (Kenyan clawed frog)).